The following is a 209-amino-acid chain: tRNA (guanine-N(7)-)-methyltransferase (209 aa).

S-adenosyl-L-methionine-binding residues include Asp-35, Glu-60, Asn-87, and Asp-113. Asp-113 is an active-site residue. Substrate is bound by residues Lys-117 and Asp-149.

It belongs to the class I-like SAM-binding methyltransferase superfamily. TrmB family.

The catalysed reaction is guanosine(46) in tRNA + S-adenosyl-L-methionine = N(7)-methylguanosine(46) in tRNA + S-adenosyl-L-homocysteine. It functions in the pathway tRNA modification; N(7)-methylguanine-tRNA biosynthesis. In terms of biological role, catalyzes the formation of N(7)-methylguanine at position 46 (m7G46) in tRNA. This is tRNA (guanine-N(7)-)-methyltransferase from Prochlorococcus marinus subsp. pastoris (strain CCMP1986 / NIES-2087 / MED4).